A 276-amino-acid chain; its full sequence is Large ribosomal subunit protein uL2 (276 aa).

Positions 225 to 276 (MNPVDHPHGGGEGRAPVGRKHPVTPWGKPAMGAKTRKKRKLSDKLIVKPRNK) are disordered. Residues 258 to 276 (KTRKKRKLSDKLIVKPRNK) are compositionally biased toward basic residues.

The protein belongs to the universal ribosomal protein uL2 family. Part of the 50S ribosomal subunit. Forms a bridge to the 30S subunit in the 70S ribosome.

One of the primary rRNA binding proteins. Required for association of the 30S and 50S subunits to form the 70S ribosome, for tRNA binding and peptide bond formation. It has been suggested to have peptidyltransferase activity; this is somewhat controversial. Makes several contacts with the 16S rRNA in the 70S ribosome. The protein is Large ribosomal subunit protein uL2 of Moorella thermoacetica (strain ATCC 39073 / JCM 9320).